Here is a 322-residue protein sequence, read N- to C-terminus: MSIVALKNAVVTLIQKAKGSGGTSELGGSESTPLLRGSNSNSSRHDNLSSSSSDIIYGRNSAQDLENSPMSVGKDNRNGDNGSDNEKANLGFFQSVDPRVISDLIIGLSDGLTVPFALTAGLSSLGDAKLVITGGFAELISGAISMGLGGYLGAKSESDYYHAEVKKEKRKFYDNSNLINREIEDILLEINPNFSDETIVSFIKDLQRTPELMVDFIIRYGRGLDEPAENRELISAVTIGGGYLLGGLVPLVPYFFVSDVGTGLIYSIIVMVVTLFWFGYVKTKLSMGSGSSTSKKVTEGVEMVVVGGVAAGAAWFFVKLLG.

Topologically, residues 1 to 99 (MSIVALKNAV…LGFFQSVDPR (99 aa)) are cytoplasmic. Residues 19–86 (GSGGTSELGG…RNGDNGSDNE (68 aa)) are disordered. Low complexity predominate over residues 26–53 (LGGSESTPLLRGSNSNSSRHDNLSSSSS). Phosphoserine is present on residues Ser29, Ser53, Ser68, Ser71, and Ser83. Residues 60–70 (NSAQDLENSPM) show a composition bias toward polar residues. The helical transmembrane segment at 100–120 (VISDLIIGLSDGLTVPFALTA) threads the bilayer. The Vacuolar segment spans residues 121–129 (GLSSLGDAK). A helical transmembrane segment spans residues 130-150 (LVITGGFAELISGAISMGLGG). Topologically, residues 151-236 (YLGAKSESDY…PAENRELISA (86 aa)) are cytoplasmic. The chain crosses the membrane as a helical span at residues 237–257 (VTIGGGYLLGGLVPLVPYFFV). The Vacuolar portion of the chain corresponds to 258–259 (SD). A helical transmembrane segment spans residues 260 to 280 (VGTGLIYSIIVMVVTLFWFGY). The Cytoplasmic segment spans residues 281–300 (VKTKLSMGSGSSTSKKVTEG). A helical membrane pass occupies residues 301–321 (VEMVVVGGVAAGAAWFFVKLL). Gly322 is a topological domain (vacuolar).

Belongs to the CCC1 family.

The protein resides in the golgi apparatus membrane. It is found in the vacuole membrane. It catalyses the reaction Fe(2+)(in) = Fe(2+)(out). Its function is as follows. Has a role in both calcium and manganese homeostasis. Involved in the transfer of iron and Mn(2+) from the cytosol to the vacuole for storage of these metals. The polypeptide is Protein CCC1 (CCC1) (Saccharomyces cerevisiae (strain ATCC 204508 / S288c) (Baker's yeast)).